The sequence spans 375 residues: Pulmonary surfactant-associated protein D (375 aa).

An N-terminal signal peptide occupies residues 1-21; that stretch reads MLLFLLSALVLLTQSLGYLEA. An S-nitrosocysteine mark is found at Cys35 and Cys40. A disordered region spans residues 43 to 221; it reads VESGLPGRDG…DKGAKGESGL (179 aa). A Collagen-like domain is found at 46 to 222; the sequence is GLPGRDGRDG…KGAKGESGLP (177 aa). Residues 50–65 show a composition bias toward basic and acidic residues; that stretch reads RDGRDGREGPRGEKGD. Pro78 is modified (4-hydroxyproline). At Lys87 the chain carries 5-hydroxylysine. Asn90 is a glycosylation site (N-linked (GlcNAc...) asparagine). A 4-hydroxyproline modification is found at Pro96. A 5-hydroxylysine modification is found at Lys99. Positions 105 to 114 are enriched in pro residues; sequence SGPPGPPGVP. Low complexity-rich tracts occupy residues 116–132 and 138–150; these read PAGR…IGPQ and KGEA…VGAP. Pro171 and Pro177 each carry 4-hydroxyproline. Over residues 173–189 the composition is skewed to low complexity; that stretch reads ERGAPGNAGAAGSAGVM. Residues 204–216 are compositionally biased toward basic and acidic residues; that stretch reads KGDKGVPGDKGAK. Residues 223 to 251 are a coiled coil; that stretch reads DVASLRQQVEALQKQVQHLQAAFSQYKKV. One can recognise a C-type lectin domain in the interval 260 to 374; it reads VGEKIFKTAG…CGEKRLVVCE (115 aa). 2 disulfides stabilise this stretch: Cys281-Cys373 and Cys351-Cys365.

This sequence belongs to the SFTPD family. As to quaternary structure, oligomeric complex of 4 set of homotrimers. In terms of processing, hydroxylation on proline residues within the sequence motif, GXPG, is most likely to be 4-hydroxy as this fits the requirement for 4-hydroxylation in vertebrates. S-nitrosylation at Cys-35 and Cys-40 alters the quaternary structure which results in a pro-inflammatory chemoattractive signaling activity with macrophages.

It is found in the secreted. Its subcellular location is the extracellular space. The protein localises to the extracellular matrix. It localises to the surface film. Contributes to the lung's defense against inhaled microorganisms, organic antigens and toxins. Interacts with compounds such as bacterial lipopolysaccharides, oligosaccharides and fatty acids and modulates leukocyte action in immune response. May participate in the extracellular reorganization or turnover of pulmonary surfactant. Binds strongly maltose residues and to a lesser extent other alpha-glucosyl moieties. This is Pulmonary surfactant-associated protein D (SFTPD) from Macaca mulatta (Rhesus macaque).